A 567-amino-acid chain; its full sequence is Dihydroxy-acid dehydratase 1 (567 aa).

A [2Fe-2S] cluster-binding site is contributed by Cys57. Asp89 is a Mg(2+) binding site. Cys130 serves as a coordination point for [2Fe-2S] cluster. Asp131 and Lys132 together coordinate Mg(2+). N6-carboxylysine is present on Lys132. Position 202 (Cys202) interacts with [2Fe-2S] cluster. Glu454 serves as a coordination point for Mg(2+). Ser480 functions as the Proton acceptor in the catalytic mechanism.

This sequence belongs to the IlvD/Edd family. In terms of assembly, homodimer. Requires [2Fe-2S] cluster as cofactor. Mg(2+) serves as cofactor.

It catalyses the reaction (2R)-2,3-dihydroxy-3-methylbutanoate = 3-methyl-2-oxobutanoate + H2O. It carries out the reaction (2R,3R)-2,3-dihydroxy-3-methylpentanoate = (S)-3-methyl-2-oxopentanoate + H2O. Its pathway is amino-acid biosynthesis; L-isoleucine biosynthesis; L-isoleucine from 2-oxobutanoate: step 3/4. It participates in amino-acid biosynthesis; L-valine biosynthesis; L-valine from pyruvate: step 3/4. Functionally, functions in the biosynthesis of branched-chain amino acids. Catalyzes the dehydration of (2R,3R)-2,3-dihydroxy-3-methylpentanoate (2,3-dihydroxy-3-methylvalerate) into 2-oxo-3-methylpentanoate (2-oxo-3-methylvalerate) and of (2R)-2,3-dihydroxy-3-methylbutanoate (2,3-dihydroxyisovalerate) into 2-oxo-3-methylbutanoate (2-oxoisovalerate), the penultimate precursor to L-isoleucine and L-valine, respectively. This is Dihydroxy-acid dehydratase 1 from Aromatoleum aromaticum (strain DSM 19018 / LMG 30748 / EbN1) (Azoarcus sp. (strain EbN1)).